Reading from the N-terminus, the 411-residue chain is Probable 26S proteasome regulatory subunit rpn-6.2 (411 aa).

A PCI domain is found at 212 to 381 (YKTSFSYFYE…DTVVIYPKAG (170 aa)).

It belongs to the proteasome subunit S9 family. Component of the lid subcomplex of the 19S proteasome regulatory particle complex (also named PA700 complex). The 26S proteasome consists of a 20S proteasome core and two 19S regulatory subunits.

Its function is as follows. Component of the lid subcomplex of the 26S proteasome, a multiprotein complex involved in the ATP-dependent degradation of ubiquitinated proteins. In the complex, rpn-6.2 is required for proteasome assembly. In Caenorhabditis briggsae, this protein is Probable 26S proteasome regulatory subunit rpn-6.2.